Consider the following 242-residue polypeptide: Type III pantothenate kinase (242 aa).

6–13 (DAGNTRIK) contacts ATP. Substrate-binding positions include Tyr-90 and 97-100 (GADR). Asp-99 acts as the Proton acceptor in catalysis. Residue Thr-122 participates in ATP binding. Thr-172 provides a ligand contact to substrate.

The protein belongs to the type III pantothenate kinase family. Homodimer. Requires NH4(+) as cofactor. It depends on K(+) as a cofactor.

The protein resides in the cytoplasm. The enzyme catalyses (R)-pantothenate + ATP = (R)-4'-phosphopantothenate + ADP + H(+). The protein operates within cofactor biosynthesis; coenzyme A biosynthesis; CoA from (R)-pantothenate: step 1/5. Its function is as follows. Catalyzes the phosphorylation of pantothenate (Pan), the first step in CoA biosynthesis. The sequence is that of Type III pantothenate kinase from Aromatoleum aromaticum (strain DSM 19018 / LMG 30748 / EbN1) (Azoarcus sp. (strain EbN1)).